A 218-amino-acid chain; its full sequence is ATP phosphoribosyltransferase (218 aa).

This sequence belongs to the ATP phosphoribosyltransferase family. Short subfamily. Heteromultimer composed of HisG and HisZ subunits.

It is found in the cytoplasm. It catalyses the reaction 1-(5-phospho-beta-D-ribosyl)-ATP + diphosphate = 5-phospho-alpha-D-ribose 1-diphosphate + ATP. The protein operates within amino-acid biosynthesis; L-histidine biosynthesis; L-histidine from 5-phospho-alpha-D-ribose 1-diphosphate: step 1/9. Its function is as follows. Catalyzes the condensation of ATP and 5-phosphoribose 1-diphosphate to form N'-(5'-phosphoribosyl)-ATP (PR-ATP). Has a crucial role in the pathway because the rate of histidine biosynthesis seems to be controlled primarily by regulation of HisG enzymatic activity. In Burkholderia mallei (strain ATCC 23344), this protein is ATP phosphoribosyltransferase.